A 147-amino-acid chain; its full sequence is Microsomal glutathione S-transferase 2 (147 aa).

3 consecutive transmembrane segments (helical) span residues 6–26 (ILLA…ALQV), 59–79 (FYPI…QVFA), and 111–131 (SLGI…NSFL).

This sequence belongs to the MAPEG family. In terms of assembly, homotrimer. In terms of tissue distribution, liver, spleen, skeletal muscle, heart, adrenals, pancreas, prostate, testis, fetal liver, and fetal spleen. Very low expression in lung, brain, placenta and bone marrow. Abundantly expressed in human umbilical vein endothelial cells (at protein level).

Its subcellular location is the endoplasmic reticulum membrane. It is found in the microsome membrane. It catalyses the reaction RX + glutathione = an S-substituted glutathione + a halide anion + H(+). The catalysed reaction is 1-chloro-2,4-dinitrobenzene + glutathione = 2,4-dinitrophenyl-S-glutathione + chloride + H(+). It carries out the reaction leukotriene C4 = leukotriene A4 + glutathione. The enzyme catalyses (5S)-hydroperoxy-(6E,8Z,11Z,14Z)-eicosatetraenoate + 2 glutathione = (5S)-hydroxy-(6E,8Z,11Z,14Z)-eicosatetraenoate + glutathione disulfide + H2O. With respect to regulation, each monomer can bind on GSH molecule but only one subunit is catalytically active. Its function is as follows. Catalyzes several different glutathione-dependent reactions. Catalyzes the glutathione-dependent reduction of lipid hydroperoxides, such as 5-HPETE. Has glutathione transferase activity, toward xenobiotic electrophiles, such as 1-chloro-2, 4-dinitrobenzene (CDNB). Also catalyzes the conjugation of leukotriene A4 with reduced glutathione to form leukotriene C4 (LTC4). Involved in oxidative DNA damage induced by ER stress and anticancer agents by activating LTC4 biosynthetic machinery in nonimmune cells. The protein is Microsomal glutathione S-transferase 2 (MGST2) of Homo sapiens (Human).